Reading from the N-terminus, the 406-residue chain is 4-hydroxy-3-methylbut-2-en-1-yl diphosphate synthase (ferredoxin) (406 aa).

Residues Cys315, Cys318, Cys349, and Glu356 each contribute to the [4Fe-4S] cluster site.

Belongs to the IspG family. The cofactor is [4Fe-4S] cluster.

It carries out the reaction (2E)-4-hydroxy-3-methylbut-2-enyl diphosphate + 2 oxidized [2Fe-2S]-[ferredoxin] + H2O = 2-C-methyl-D-erythritol 2,4-cyclic diphosphate + 2 reduced [2Fe-2S]-[ferredoxin] + H(+). The protein operates within isoprenoid biosynthesis; isopentenyl diphosphate biosynthesis via DXP pathway; isopentenyl diphosphate from 1-deoxy-D-xylulose 5-phosphate: step 5/6. Its function is as follows. Converts 2C-methyl-D-erythritol 2,4-cyclodiphosphate (ME-2,4cPP) into 1-hydroxy-2-methyl-2-(E)-butenyl 4-diphosphate. This Rippkaea orientalis (strain PCC 8801 / RF-1) (Cyanothece sp. (strain PCC 8801)) protein is 4-hydroxy-3-methylbut-2-en-1-yl diphosphate synthase (ferredoxin).